The sequence spans 266 residues: L-cystine-binding protein TcyJ (266 aa).

Residues 1-29 (MKLAHLGRQALMGVMAVALVAGMSVKSFA) form the signal peptide.

Belongs to the bacterial solute-binding protein 3 family. As to quaternary structure, the complex is composed of two ATP-binding proteins (TcyN), two transmembrane proteins (TcyL) and a solute-binding protein (TcyJ).

The protein resides in the periplasm. Its function is as follows. Part of the ABC transporter complex TcyJLN involved in L-cystine import. Binds cystine. This is L-cystine-binding protein TcyJ from Escherichia coli O6:H1 (strain CFT073 / ATCC 700928 / UPEC).